The following is a 197-amino-acid chain: Xanthine phosphoribosyltransferase (197 aa).

Xanthine contacts are provided by L20 and N27. 128-132 lines the 5-phospho-alpha-D-ribose 1-diphosphate pocket; that stretch reads ANGQA. K156 provides a ligand contact to xanthine.

The protein belongs to the purine/pyrimidine phosphoribosyltransferase family. Xpt subfamily. In terms of assembly, homodimer.

The protein resides in the cytoplasm. It carries out the reaction XMP + diphosphate = xanthine + 5-phospho-alpha-D-ribose 1-diphosphate. Its pathway is purine metabolism; XMP biosynthesis via salvage pathway; XMP from xanthine: step 1/1. Functionally, converts the preformed base xanthine, a product of nucleic acid breakdown, to xanthosine 5'-monophosphate (XMP), so it can be reused for RNA or DNA synthesis. This Bacillus mycoides (strain KBAB4) (Bacillus weihenstephanensis) protein is Xanthine phosphoribosyltransferase.